Consider the following 84-residue polypeptide: Small ribosomal subunit protein bS16 (84 aa).

It belongs to the bacterial ribosomal protein bS16 family.

The protein is Small ribosomal subunit protein bS16 of Paraburkholderia phymatum (strain DSM 17167 / CIP 108236 / LMG 21445 / STM815) (Burkholderia phymatum).